The primary structure comprises 399 residues: uncharacterized protein (399 aa).

The next 10 helical transmembrane spans lie at 7 to 27 (FSALRGLAMGIFSPIWILYLI), 33 to 53 (FLQIGLMGAVLEIAKLIFEVP), 79 to 99 (AFFPFIDSAAICILAMIIWAL), 131 to 151 (LLITFLIIGSIASGYLYSLNI), 153 to 173 (FPFLLVMVIYLLLFIWMSVFI), 208 to 228 (VLLIVIAGFFTATAYDTISRY), 242 to 262 (SLGYIFALGGFTALVLLTLTI), 296 to 316 (PLGIPCTAFLLAIEDIHHPIV), 335 to 355 (LNSGVGAIGEILSGVIFGIIS), and 357 to 377 (AFGLSAMFVVVAVFLLIPIIL).

This sequence belongs to the major facilitator superfamily. Drug:H(+) antiporter-3 (DHA3) (TC 2.A.1.21) family.

The protein resides in the cell membrane. This is an uncharacterized protein from Bacillus subtilis (strain 168).